Reading from the N-terminus, the 234-residue chain is MIKLIVNADDFGLTEGTNYGIIDGHINGLVNSTTMMMNMPGTEHAVHLAKEYKTLGVGVHLVLTAGKPLLGDVPSLVSSDGLFHKQSVVWEGKVNPEEVEREWTAQIEKFLSYGLKPTHLDSHHHVHGLPILHDVLERLAATYNVPIRRCEEERAVRPFSDLFYSDFYADGVTEDYFVKLKERVQGEQTVEIMVHPAYIDPELVKRSSYVMDRVKELRILTESELPEGIELVKF.

The Mg(2+) site is built by His-60 and His-123.

The protein belongs to the YdjC deacetylase family. Requires Mg(2+) as cofactor.

In terms of biological role, probably catalyzes the deacetylation of acetylated carbohydrates an important step in the degradation of oligosaccharides. The chain is Carbohydrate deacetylase from Bacillus anthracis.